The primary structure comprises 226 residues: ATP synthase subunit a 1 (226 aa).

5 consecutive transmembrane segments (helical) span residues 20–40 (LTIV…WLIT), 78–98 (YLPF…CTVI), 113–133 (ALAL…SGLV), 174–194 (MILV…MNIL), and 196–216 (LLTG…YIAA).

This sequence belongs to the ATPase A chain family. In terms of assembly, F-type ATPases have 2 components, CF(1) - the catalytic core - and CF(0) - the membrane proton channel. CF(1) has five subunits: alpha(3), beta(3), gamma(1), delta(1), epsilon(1). CF(0) has four main subunits: a, b, b' and c.

Its subcellular location is the cell inner membrane. In terms of biological role, key component of the proton channel; it plays a direct role in the translocation of protons across the membrane. The chain is ATP synthase subunit a 1 from Chlorobaculum parvum (strain DSM 263 / NCIMB 8327) (Chlorobium vibrioforme subsp. thiosulfatophilum).